A 1213-amino-acid polypeptide reads, in one-letter code: MVDVNRFKSMQITLASPSKVRSWSYGEVKKPETINYRTLKPEREGLFDEVIFGPTKDWECACGKYKRIRYKGIVCDRCGVEVTRAKVRRERMGHIELKAPVSHIWYFKGIPSRMGLTLDMSPRALEEVIYFAAYVVIDPKDTPLEPKSLLTEREYREKLQEYGHGSFVAKMGAEAIQDLLKRVDLAAEIAELKEELKSASGQKRIKAVRRLDVLDAFNKSGNKPEWMVLNILPVIPPDLRPMVQLDGGRFAASDLNDLYRRVINRNNRLARLLELNAPGIIVQNEKRMLQEAVDALIDNGRRGRPITGPGSRPLKSLSHMLKGKQGRFRQNLLGKRVDFSGRSVIAVGPTLKMYQCGVPREMAIELFKPFVMREIVAKEYAGNVKAAKRMVERGDERIWDILEEVIKEHPVLLNRAPTLHRLGIQAFEPVLIDGKALRLHPLVCEAYNADFDGDQMAIHVPLSEEAQAEARLLMLAAEHILNPKDGKPVVTPSQDMVLGNYYLTMEDAGREGEGMIFKDKDEAVMAYRNGYAHLHSRVGIAVDSMPNKPWKDNQRHKIMVTTVGKILFNDIMPEDLPYLQEPNNANLTEGTPDKYFLEPGQDIQEVIDGLDINVPFKKKNLGNIIAETFKRFRTTETSAFLDRLKDLGYYHSTLAGLTVGIADIPVIDNKAEIIDAAHHRVEEINKAFRRGLMTDDDRYVAVTTTWREAKEALEKRLIETQDPKNPIVMMMDSGARGNISNFSQLAGMRGLMAAPNGRIMELPILSNFREGLSVLEMFFSTHGARKGMTDTALKTADSGYLTRRLVDVAQDVIIREDDCGTDRGLLIRAITDGKEVTETLEERLQGRYTRKSVKHPETGEVLIGADQLITEDMARKIVDAGVEEVTIRSVFTCATRHGVCRHCYGINLATGDAVEVGEAVGTIAAQSIGEPGTQLTMRTFHTGGVASNTDITQGLPRIQEIFEARNPKGEAVITEVKGNVVEIEEDASTRTKKVYVQGKTGMGEYVVPFTARMKVEVGDEVNRGAALTEGSIQPKRLLEVRDTLSVETYLLAEVQKVYRSQGVEIGDKHVEVMVRQMLRKVRVMDPGDTDLLPGTLMDISDFTDANKDIVISGGIPATSRPVLMGITKASLETNSFLSAASFQETTRVLTDAAIRGKKDHLLGLKENVIIGKIIPAGTGMARYRNIEPQAMNEIEVIDHTEVSAEAVFTAEAE.

Zn(2+)-binding residues include Cys-60, Cys-62, Cys-75, and Cys-78. Asp-450, Asp-452, and Asp-454 together coordinate Mg(2+). Zn(2+) is bound by residues Cys-819, Cys-893, Cys-900, and Cys-903.

This sequence belongs to the RNA polymerase beta' chain family. In terms of assembly, the RNAP catalytic core consists of 2 alpha, 1 beta, 1 beta' and 1 omega subunit. When a sigma factor is associated with the core the holoenzyme is formed, which can initiate transcription. Requires Mg(2+) as cofactor. The cofactor is Zn(2+).

The enzyme catalyses RNA(n) + a ribonucleoside 5'-triphosphate = RNA(n+1) + diphosphate. Functionally, DNA-dependent RNA polymerase catalyzes the transcription of DNA into RNA using the four ribonucleoside triphosphates as substrates. The polypeptide is DNA-directed RNA polymerase subunit beta' (Streptococcus pyogenes serotype M2 (strain MGAS10270)).